A 399-amino-acid polypeptide reads, in one-letter code: MAREKFERNKPHVNIGTIGHVDHGKTTLTAAITNVLAKKGQAQAQDYGDIDGAPEERERGITINTAHVEYETDGRHYAHVDCPGHADYVKNMITGAAQMDGAILVCAATDGPMAQTKEHILLAKQVGVPALVVALNKCDMVDDPEIIELVEMEIRELLDSYDFPGDEIPIVQVSGLKALEGDSEWEGKVEELMKAVDASIPEPEREVDKPFLMAVEDVFSITGRGTVATGRIERGKVTVGEEVEIVGIRDTRLTTVTGVEMFRKLLDEGMAGDNVGLLLRGIQKEDIERGMVLVKKGSITPHTQFEGEVYVLKKEEGGRHTPFFAGYRPQFYIRTTDVTGQITAFTADDGSSVEMVMPGDRIKMTGELICPVAIEQGMRFAIREGGRTIGAGVVSKIIK.

The tr-type G domain maps to 10 to 204 (KPHVNIGTIG…AVDASIPEPE (195 aa)). Residues 19–26 (GHVDHGKT) form a G1 region. Residue 19 to 26 (GHVDHGKT) participates in GTP binding. Threonine 26 contributes to the Mg(2+) binding site. The G2 stretch occupies residues 60–64 (GITIN). Residues 81-84 (DCPG) form a G3 region. Residues 81-85 (DCPGH) and 136-139 (NKCD) contribute to the GTP site. Residues 136–139 (NKCD) are G4. The G5 stretch occupies residues 174 to 176 (SGL).

It belongs to the TRAFAC class translation factor GTPase superfamily. Classic translation factor GTPase family. EF-Tu/EF-1A subfamily. Monomer.

The protein localises to the cytoplasm. The catalysed reaction is GTP + H2O = GDP + phosphate + H(+). GTP hydrolase that promotes the GTP-dependent binding of aminoacyl-tRNA to the A-site of ribosomes during protein biosynthesis. The protein is Elongation factor Tu of Prochlorococcus marinus (strain SARG / CCMP1375 / SS120).